A 179-amino-acid chain; its full sequence is Alpha-S2-casein-like A (179 aa).

The N-terminal stretch at 1 to 15 (MKFFIFTCLVAAALA) is a signal peptide. Phosphoserine occurs at positions 24 and 25. A disordered region spans residues 44-121 (FQTPQDSASS…NAIYDVPSQE (78 aa)). The span at 63-74 (ISEKIEQSEEQK) shows a compositional bias: basic and acidic residues. Residues 93-110 (PQICTPYQQQSSVNQRPQ) are compositionally biased toward polar residues.

The protein belongs to the alpha-casein family. As to expression, mammary gland specific. Secreted in milk.

The protein resides in the secreted. Functionally, important role in the capacity of milk to transport calcium phosphate. The protein is Alpha-S2-casein-like A (Csn1s2a) of Rattus norvegicus (Rat).